The following is a 172-amino-acid chain: NADH-quinone oxidoreductase subunit B (172 aa).

Residues Cys-46, Cys-47, Cys-111, and Cys-141 each coordinate [4Fe-4S] cluster.

Belongs to the complex I 20 kDa subunit family. In terms of assembly, NDH-1 is composed of 14 different subunits. Subunits NuoB, C, D, E, F, and G constitute the peripheral sector of the complex. It depends on [4Fe-4S] cluster as a cofactor.

The protein localises to the cell membrane. It catalyses the reaction a quinone + NADH + 5 H(+)(in) = a quinol + NAD(+) + 4 H(+)(out). NDH-1 shuttles electrons from NADH, via FMN and iron-sulfur (Fe-S) centers, to quinones in the respiratory chain. The immediate electron acceptor for the enzyme in this species is believed to be a menaquinone. Couples the redox reaction to proton translocation (for every two electrons transferred, four hydrogen ions are translocated across the cytoplasmic membrane), and thus conserves the redox energy in a proton gradient. The protein is NADH-quinone oxidoreductase subunit B of Bacillus cereus (strain G9842).